The primary structure comprises 132 residues: Pro-MCH 1 (132 aa).

The signal sequence occupies residues 1–24 (MRDSVLSVIFALALFLECYTPSMA). C120 and C129 form a disulfide bridge.

This sequence belongs to the MCH family. As to expression, pituitary gland. Produced in neurons of lateral basal hypothalamus which project both to the brain and to the neural lobe of the pituitary gland from where MCH is released.

In terms of biological role, plays a role in skin pigmentation by antagonizing the action of melanotropin alpha. Induces melanin concentration within the melanophores. May participate in the control of the hypothalamo-pituitary adrenal gland axis by inhibiting the release of ACTH. In Oncorhynchus kisutch (Coho salmon), this protein is Pro-MCH 1 (mch1).